Here is a 401-residue protein sequence, read N- to C-terminus: NADH-quinone oxidoreductase subunit D (401 aa).

The protein belongs to the complex I 49 kDa subunit family. NDH-1 is composed of 15 different subunits. Subunits NuoB, C, D, E, F, and G constitute the peripheral sector of the complex.

Its subcellular location is the cell membrane. It carries out the reaction a quinone + NADH + 5 H(+)(in) = a quinol + NAD(+) + 4 H(+)(out). NDH-1 shuttles electrons from NADH, via FMN and iron-sulfur (Fe-S) centers, to quinones in the respiratory chain. The immediate electron acceptor for the enzyme in this species is believed to be a menaquinone. Couples the redox reaction to proton translocation (for every two electrons transferred, four hydrogen ions are translocated across the cytoplasmic membrane), and thus conserves the redox energy in a proton gradient. The sequence is that of NADH-quinone oxidoreductase subunit D from Deinococcus radiodurans (strain ATCC 13939 / DSM 20539 / JCM 16871 / CCUG 27074 / LMG 4051 / NBRC 15346 / NCIMB 9279 / VKM B-1422 / R1).